A 236-amino-acid chain; its full sequence is Purine nucleoside phosphorylase (236 aa).

Histidine 5 serves as a coordination point for a purine D-ribonucleoside. Residues glycine 21, arginine 25, arginine 43, and 86–89 (RYGT) contribute to the phosphate site. A purine D-ribonucleoside contacts are provided by residues glutamate 163, 180–182 (EME), and 204–205 (SD).

Belongs to the PNP/UDP phosphorylase family. In terms of assembly, homohexamer; disulfide-linked. Trimer of homodimers, with three symmetric intersubunit disulfide bonds linking the dimers to one another.

The enzyme catalyses S-methyl-5'-thioadenosine + phosphate = 5-(methylsulfanyl)-alpha-D-ribose 1-phosphate + adenine. It catalyses the reaction a purine D-ribonucleoside + phosphate = a purine nucleobase + alpha-D-ribose 1-phosphate. The catalysed reaction is a purine 2'-deoxy-D-ribonucleoside + phosphate = a purine nucleobase + 2-deoxy-alpha-D-ribose 1-phosphate. The protein operates within purine metabolism; purine nucleoside salvage. Functionally, cleavage of guanosine or inosine to respective bases and sugar-1-phosphate molecules. Cleaves inosine, guanosine, and adenosine with a better efficiency than MTA. The protein is Purine nucleoside phosphorylase of Saccharolobus solfataricus (strain ATCC 35092 / DSM 1617 / JCM 11322 / P2) (Sulfolobus solfataricus).